We begin with the raw amino-acid sequence, 224 residues long: CASP-like protein 3A1 (224 aa).

Topologically, residues 1 to 59 (MMMNGQKLAPAAEVAVQLPESKVAADNISGTMSGPLVGASGGGTTAAMRPFGRKAEVMH) are cytoplasmic. A helical membrane pass occupies residues 60 to 80 (VLLRLLCIITSVAALSFMFTA). The Extracellular portion of the chain corresponds to 81–106 (QQSSTISIYGFMLPVQSKWSFSHSFE). Residues 107-127 (YLVGVSAAVAAHSLLQLLISM) traverse the membrane as a helical segment. Over 128 to 142 (SRLLRKSPVIPSRSH) the chain is Cytoplasmic. Residues 143 to 163 (AWLIFAGDQVFAYAMISAGAA) traverse the membrane as a helical segment. Topologically, residues 164-192 (ASGVTNLNRTGIQHTALPNFCKPLQSFCD) are extracellular. The N-linked (GlcNAc...) asparagine glycan is linked to Asn171. The chain crosses the membrane as a helical span at residues 193–213 (HVAVSIFFTFTSCFLLAASAV). Over 214 to 224 (QEVIWLSRSKY) the chain is Cytoplasmic.

It belongs to the Casparian strip membrane proteins (CASP) family. As to quaternary structure, homodimer and heterodimers.

The protein resides in the cell membrane. The polypeptide is CASP-like protein 3A1 (Populus trichocarpa (Western balsam poplar)).